A 253-amino-acid polypeptide reads, in one-letter code: Tryptophan synthase alpha chain (253 aa).

Active-site proton acceptor residues include glutamate 47 and aspartate 58.

This sequence belongs to the TrpA family. Tetramer of two alpha and two beta chains.

The catalysed reaction is (1S,2R)-1-C-(indol-3-yl)glycerol 3-phosphate + L-serine = D-glyceraldehyde 3-phosphate + L-tryptophan + H2O. The protein operates within amino-acid biosynthesis; L-tryptophan biosynthesis; L-tryptophan from chorismate: step 5/5. In terms of biological role, the alpha subunit is responsible for the aldol cleavage of indoleglycerol phosphate to indole and glyceraldehyde 3-phosphate. This is Tryptophan synthase alpha chain from Lactococcus lactis subsp. lactis (strain IL1403) (Streptococcus lactis).